The sequence spans 248 residues: Probable cyclic nucleotide phosphodiesterase CBUA0032 (248 aa).

Fe cation-binding residues include Asp-13, His-15, Asp-52, Asn-82, His-152, His-191, and His-193. AMP-binding positions include His-15, Asp-52, and 82 to 83; that span reads NH. His-193 lines the AMP pocket.

Belongs to the cyclic nucleotide phosphodiesterase class-III family. The cofactor is Fe(2+).

In Coxiella burnetii (strain RSA 493 / Nine Mile phase I), this protein is Probable cyclic nucleotide phosphodiesterase CBUA0032.